Reading from the N-terminus, the 201-residue chain is Dephospho-CoA kinase (201 aa).

The region spanning 4–201 is the DPCK domain; sequence AFFVTASIAC…VIQEISKGKM (198 aa). Position 12–17 (12–17) interacts with ATP; that stretch reads ACGKST.

It belongs to the CoaE family.

It localises to the cytoplasm. The catalysed reaction is 3'-dephospho-CoA + ATP = ADP + CoA + H(+). Its pathway is cofactor biosynthesis; coenzyme A biosynthesis; CoA from (R)-pantothenate: step 5/5. Its function is as follows. Catalyzes the phosphorylation of the 3'-hydroxyl group of dephosphocoenzyme A to form coenzyme A. This is Dephospho-CoA kinase from Campylobacter jejuni (strain RM1221).